Consider the following 339-residue polypeptide: Heat-inducible transcription repressor HrcA (339 aa).

This sequence belongs to the HrcA family.

Functionally, negative regulator of class I heat shock genes (grpE-dnaK-dnaJ and groELS operons). Prevents heat-shock induction of these operons. The protein is Heat-inducible transcription repressor HrcA of Thermotoga neapolitana (strain ATCC 49049 / DSM 4359 / NBRC 107923 / NS-E).